The primary structure comprises 311 residues: tRNA dimethylallyltransferase (311 aa).

9–16 (GPTAVGKT) contributes to the ATP binding site. Residue 11–16 (TAVGKT) participates in substrate binding. The interval 34-37 (DSMQ) is interaction with substrate tRNA.

The protein belongs to the IPP transferase family. In terms of assembly, monomer. Mg(2+) is required as a cofactor.

The catalysed reaction is adenosine(37) in tRNA + dimethylallyl diphosphate = N(6)-dimethylallyladenosine(37) in tRNA + diphosphate. In terms of biological role, catalyzes the transfer of a dimethylallyl group onto the adenine at position 37 in tRNAs that read codons beginning with uridine, leading to the formation of N6-(dimethylallyl)adenosine (i(6)A). This Clostridium botulinum (strain Okra / Type B1) protein is tRNA dimethylallyltransferase.